The primary structure comprises 203 residues: Cardiotrophin-1 (203 aa).

This sequence belongs to the IL-6 superfamily. Highly expressed in heart, skeletal muscle, liver, lung and kidney. Lower levels in testis and brain. No expression in spleen.

Its subcellular location is the secreted. Induces cardiac myocyte hypertrophy in vitro. Binds to and activates the ILST/gp130 receptor. This is Cardiotrophin-1 (Ctf1) from Mus musculus (Mouse).